Reading from the N-terminus, the 1938-residue chain is Myosin-6 (1938 aa).

The Myosin N-terminal SH3-like domain maps to Asp-31–Pro-80. The Myosin motor domain occupies Asp-84–Asp-779. The residue at position 128 (Lys-128) is an N6,N6,N6-trimethyllysine. Gly-177–Thr-184 is a binding site for ATP. Position 378 is a phosphothreonine (Thr-378). At Ser-416 the chain carries Phosphoserine. Actin-binding regions lie at residues Leu-656–Glu-678 and Lys-758–Gly-772. Residues Leu-782–Ala-811 enclose the IQ domain. 2 calmodulin-binding regions span residues Ile-789 to Val-806 and Ile-815 to Lys-832. A coiled-coil region spans residues Lys-842–Glu-1938. 2 positions are modified to phosphoserine: Ser-1089 and Ser-1138. Tyr-1260 is subject to Phosphotyrosine. At Ser-1270 the chain carries Phosphoserine. A phosphothreonine mark is found at Thr-1276 and Thr-1283. Residue Ser-1308 is modified to Phosphoserine. Phosphotyrosine is present on Tyr-1309. A Phosphothreonine modification is found at Thr-1310. Ser-1511 carries the phosphoserine modification. 2 positions are modified to phosphothreonine: Thr-1514 and Thr-1680. Residues Ala-1907 to Glu-1938 form a disordered region. The span at Lys-1924 to Glu-1938 shows a compositional bias: basic and acidic residues.

It belongs to the TRAFAC class myosin-kinesin ATPase superfamily. Myosin family. Muscle myosin is a hexameric protein that consists of 2 heavy chain subunits (MHC), 2 alkali light chain subunits (MLC) and 2 regulatory light chain subunits (MLC-2).

It is found in the cytoplasm. It localises to the myofibril. Muscle contraction. This chain is Myosin-6 (Myh6), found in Rattus norvegicus (Rat).